Here is a 350-residue protein sequence, read N- to C-terminus: Cephaeline 6'-O-methyltransferase IpeOMT1 (350 aa).

S-adenosyl-L-methionine contacts are provided by G193, D216, D236, M237, and K250. H254 functions as the Proton acceptor in the catalytic mechanism.

The protein belongs to the class I-like SAM-binding methyltransferase superfamily. Cation-independent O-methyltransferase family. In terms of tissue distribution, expressed in roots.

Its subcellular location is the cytoplasm. The protein localises to the cytosol. The enzyme catalyses cephaeline + S-adenosyl-L-methionine = emetine + S-adenosyl-L-homocysteine + H(+). The catalysed reaction is deacetylisoipecoside + S-adenosyl-L-methionine = 6-O-methyldeacetylisoipecoside + S-adenosyl-L-homocysteine + H(+). It catalyses the reaction 7-O-methyldeacetylisoipecoside + S-adenosyl-L-methionine = 6,7-O,O-dimethyldeacetylisoipecoside + S-adenosyl-L-homocysteine + H(+). It carries out the reaction norcoclaurine + S-adenosyl-L-methionine = coclaurine + S-adenosyl-L-homocysteine + H(+). The enzyme catalyses (S)-norprotosinomenine + S-adenosyl-L-methionine = (S)-6-O-methylnorprotosinomenine + S-adenosyl-L-homocysteine + H(+). The catalysed reaction is (R)-norprotosinomenine + S-adenosyl-L-methionine = (R)-6-O-methylnorprotosinomenine + S-adenosyl-L-homocysteine + H(+). The protein operates within alkaloid biosynthesis. In terms of biological role, O-methyltransferase involved in the biosynthesis of ipecac and benzylisoquinoline monoterpenoid-isoquinoline alkaloids natural products, starting by the condensation of dopamine and secologanin, and including emetine and cephaeline, drugs used both as anti-protozoal (e.g. treatment of ameobiasis) and as emetic agents. Mediates cephaeline 6'-O-methylation to produce emetine. Catalyzes the 6-O-methylation of N-deacetylisoipecoside, 7-O-methyl-N-deacetylisoipecoside, isococlaurine, norcoclaurine, (S)-norprotosinomenine and (R)-norprotosinomenine, and, with a lower efficiency, of 4'-O-methyllaudanosoline, isoorientaline and protosinomenine. Supports also the 4'-O-methylation of nororientaline. The sequence is that of Cephaeline 6'-O-methyltransferase IpeOMT1 from Carapichea ipecacuanha (Ipecac).